Reading from the N-terminus, the 961-residue chain is Ras-interacting protein 1 (961 aa).

The span at 1-10 (MLSGERKEGG) shows a compositional bias: basic and acidic residues. Disordered regions lie at residues 1–21 (MLSGERKEGGSPRFGKLHLPV), 35–70 (LGRRWPSAASVKSSSSDTGSRSSEPLPPPPPPPHVE), and 96–116 (RGSGAGGAGGPGTPGGAQRWA). Positions 41–57 (SAASVKSSSSDTGSRSS) are enriched in low complexity. A compositionally biased stretch (pro residues) spans 59–68 (PLPPPPPPPH). Arginine 96 is modified (omega-N-methylarginine). Residues 98–110 (SGAGGAGGPGTPG) show a composition bias toward gly residues. The 113-residue stretch at 141-253 (PPGVLKIFAS…RRFELRGREE (113 aa)) folds into the Ras-associating domain. Positions 261–352 (AFGAADADGT…MAPGAADAQM (92 aa)) are disordered. Serine 274 and serine 286 each carry phosphoserine. Positions 284–295 (AASGGAALASPG) are enriched in low complexity. The span at 296-307 (PGSGSGTPTGSG) shows a compositional bias: gly residues. Over residues 314 to 327 (NLSLRRSVSELSLQ) the composition is skewed to low complexity. A phosphoserine mark is found at serine 320, serine 322, serine 325, and serine 413. A Dilute domain is found at 594–895 (GRLARLIKEA…PPAERDAVDT (302 aa)).

As to quaternary structure, interacts with Ras family members that have been activated by GTP binding. Interacts with HRAS, RAP1A, RAP2, RRAS, RAF1 and RRAS2. Interacts with MYH9 and ARHGAP29. As to expression, detected in kidney, heart, skeletal muscle, small intestine and lung.

The protein localises to the cytoplasm. The protein resides in the perinuclear region. Its subcellular location is the golgi apparatus. It is found in the golgi stack. Functionally, required for the proper formation of vascular structures that develop via both vasculogenesis and angiogenesis. Acts as a critical and vascular-specific regulator of GTPase signaling, cell architecture, and adhesion, which is essential for endothelial cell morphogenesis and blood vessel tubulogenesis. Regulates the activity of Rho GTPases in part by recruiting ARHGAP29 and suppressing RhoA signaling and dampening ROCK and MYH9 activities in endothelial cells. May act as effector for Golgi-bound HRAS and other Ras-like proteins. May promote HRAS-mediated transformation. Negative regulator of amino acid starvation-induced autophagy. The polypeptide is Ras-interacting protein 1 (Rasip1) (Mus musculus (Mouse)).